Here is a 77-residue protein sequence, read N- to C-terminus: MSVIFAPDWLRGKAKVNQETIQRLLEENDQLIRCIVEYQNKGRANECVQYQHVLHRNLIYLATIADANTSSLTKAVE.

The short motif at 50–53 is the SH2-binding element; sequence YQHV.

Belongs to the SS18 family.

This is SS18-like protein 2 (Ss18l2) from Mus musculus (Mouse).